Here is a 298-residue protein sequence, read N- to C-terminus: Glutamyl-Q tRNA(Asp) synthetase (298 aa).

L-glutamate-binding positions include 9–13 (RFAPS) and glutamate 45. A 'HIGH' region motif is present at residues 12–22 (PSPSGELHFGS). 4 residues coordinate Zn(2+): cysteine 101, cysteine 103, tyrosine 115, and cysteine 119. L-glutamate-binding residues include tyrosine 172 and arginine 190. The short motif at 228 to 232 (KLSKQ) is the 'KMSKS' region element. Lysine 231 serves as a coordination point for ATP.

It belongs to the class-I aminoacyl-tRNA synthetase family. GluQ subfamily. It depends on Zn(2+) as a cofactor.

In terms of biological role, catalyzes the tRNA-independent activation of glutamate in presence of ATP and the subsequent transfer of glutamate onto a tRNA(Asp). Glutamate is transferred on the 2-amino-5-(4,5-dihydroxy-2-cyclopenten-1-yl) moiety of the queuosine in the wobble position of the QUC anticodon. In Salmonella paratyphi A (strain ATCC 9150 / SARB42), this protein is Glutamyl-Q tRNA(Asp) synthetase.